Here is a 235-residue protein sequence, read N- to C-terminus: 1-(5-phosphoribosyl)-5-[(5-phosphoribosylamino)methylideneamino] imidazole-4-carboxamide isomerase (235 aa).

Aspartate 8 (proton acceptor) is an active-site residue. The active-site Proton donor is the aspartate 127.

It belongs to the HisA/HisF family.

It is found in the cytoplasm. The catalysed reaction is 1-(5-phospho-beta-D-ribosyl)-5-[(5-phospho-beta-D-ribosylamino)methylideneamino]imidazole-4-carboxamide = 5-[(5-phospho-1-deoxy-D-ribulos-1-ylimino)methylamino]-1-(5-phospho-beta-D-ribosyl)imidazole-4-carboxamide. It functions in the pathway amino-acid biosynthesis; L-histidine biosynthesis; L-histidine from 5-phospho-alpha-D-ribose 1-diphosphate: step 4/9. This chain is 1-(5-phosphoribosyl)-5-[(5-phosphoribosylamino)methylideneamino] imidazole-4-carboxamide isomerase, found in Aliarcobacter butzleri (strain RM4018) (Arcobacter butzleri).